The primary structure comprises 100 residues: C-X-C motif chemokine 2 (100 aa).

The N-terminal stretch at M1–G27 is a signal peptide. Cystine bridges form between C36–C62 and C38–C78.

This sequence belongs to the intercrine alpha (chemokine CxC) family. As to quaternary structure, homotetramer.

It localises to the secreted. Its function is as follows. Chemotactic for human polymorphonuclear leukocytes but does not induce chemokinesis or an oxidative burst. The sequence is that of C-X-C motif chemokine 2 (Cxcl2) from Mus musculus (Mouse).